The following is a 302-amino-acid chain: Lactoylglutathione lyase (302 aa).

2 consecutive VOC domains span residues 11-153 (KLNH…LVSQ) and 166-301 (RFNH…VIEQ). His-14 provides a ligand contact to Zn(2+). Arg-18 lines the substrate pocket. Glu-75 contacts Zn(2+). Asn-79, Arg-99, and His-103 together coordinate substrate. Residues His-103 and Glu-149 each contribute to the Zn(2+) site. Glu-149 acts as the Proton donor/acceptor in catalysis.

It belongs to the glyoxalase I family. In terms of assembly, monomer. Zn(2+) is required as a cofactor. Cu(2+) serves as cofactor. The cofactor is Ni(2+). Requires Mn(2+) as cofactor.

It carries out the reaction (R)-S-lactoylglutathione = methylglyoxal + glutathione. The protein operates within secondary metabolite metabolism; methylglyoxal degradation; (R)-lactate from methylglyoxal: step 1/2. Catalyzes the conversion of hemimercaptal, formed from methylglyoxal and glutathione, to S-lactoylglutathione. This is Lactoylglutathione lyase (glo1) from Schizosaccharomyces pombe (strain 972 / ATCC 24843) (Fission yeast).